The following is a 512-amino-acid chain: V-type proton ATPase subunit B (512 aa).

Residue arginine 381 participates in ATP binding. The segment at 484 to 512 (LYGRDREQDDDEDEDEEDPDKSGDKLIDA) is disordered. A compositionally biased stretch (acidic residues) spans 491–502 (QDDDEDEDEEDP). Residues 503-512 (DKSGDKLIDA) show a composition bias toward basic and acidic residues.

Belongs to the ATPase alpha/beta chains family. As to quaternary structure, V-ATPase is a heteromultimeric enzyme composed of a peripheral catalytic V1 complex (components A to H) attached to an integral membrane V0 proton pore complex (components: a, c, c', c'', d, e, f and VOA1).

The protein resides in the vacuole membrane. Non-catalytic subunit of the V1 complex of vacuolar(H+)-ATPase (V-ATPase), a multisubunit enzyme composed of a peripheral complex (V1) that hydrolyzes ATP and a membrane integral complex (V0) that translocates protons. Plays an important role in resistance to several stresses, as well as in autophagy and virulence. The polypeptide is V-type proton ATPase subunit B (Candida albicans (strain SC5314 / ATCC MYA-2876) (Yeast)).